We begin with the raw amino-acid sequence, 473 residues long: Glutamate--tRNA ligase (473 aa).

A 'HIGH' region motif is present at residues 13–23 (PSPTGFLHVGG). The 'KMSKS' region motif lies at 240–244 (KLSKR). Residue lysine 243 coordinates ATP.

Belongs to the class-I aminoacyl-tRNA synthetase family. Glutamate--tRNA ligase type 1 subfamily. In terms of assembly, monomer.

It is found in the cytoplasm. The enzyme catalyses tRNA(Glu) + L-glutamate + ATP = L-glutamyl-tRNA(Glu) + AMP + diphosphate. Functionally, catalyzes the attachment of glutamate to tRNA(Glu) in a two-step reaction: glutamate is first activated by ATP to form Glu-AMP and then transferred to the acceptor end of tRNA(Glu). The polypeptide is Glutamate--tRNA ligase (Shewanella denitrificans (strain OS217 / ATCC BAA-1090 / DSM 15013)).